The sequence spans 96 residues: Glutamyl-tRNA(Gln) amidotransferase subunit C (96 aa).

The protein belongs to the GatC family. In terms of assembly, heterotrimer of A, B and C subunits.

The enzyme catalyses L-glutamyl-tRNA(Gln) + L-glutamine + ATP + H2O = L-glutaminyl-tRNA(Gln) + L-glutamate + ADP + phosphate + H(+). It carries out the reaction L-aspartyl-tRNA(Asn) + L-glutamine + ATP + H2O = L-asparaginyl-tRNA(Asn) + L-glutamate + ADP + phosphate + 2 H(+). In terms of biological role, allows the formation of correctly charged Asn-tRNA(Asn) or Gln-tRNA(Gln) through the transamidation of misacylated Asp-tRNA(Asn) or Glu-tRNA(Gln) in organisms which lack either or both of asparaginyl-tRNA or glutaminyl-tRNA synthetases. The reaction takes place in the presence of glutamine and ATP through an activated phospho-Asp-tRNA(Asn) or phospho-Glu-tRNA(Gln). This chain is Glutamyl-tRNA(Gln) amidotransferase subunit C, found in Pseudomonas aeruginosa (strain ATCC 15692 / DSM 22644 / CIP 104116 / JCM 14847 / LMG 12228 / 1C / PRS 101 / PAO1).